A 333-amino-acid chain; its full sequence is Phosphate acyltransferase (333 aa).

The protein belongs to the PlsX family. As to quaternary structure, homodimer. Probably interacts with PlsY.

It is found in the cytoplasm. It carries out the reaction a fatty acyl-[ACP] + phosphate = an acyl phosphate + holo-[ACP]. It participates in lipid metabolism; phospholipid metabolism. Functionally, catalyzes the reversible formation of acyl-phosphate (acyl-PO(4)) from acyl-[acyl-carrier-protein] (acyl-ACP). This enzyme utilizes acyl-ACP as fatty acyl donor, but not acyl-CoA. The chain is Phosphate acyltransferase from Clostridium botulinum (strain Alaska E43 / Type E3).